The primary structure comprises 557 residues: Organic cation/carnitine transporter 2 (557 aa).

The Cytoplasmic segment spans residues 1–20 (MRDYDEVTAFLGEWGPFQRL). Residues 21–41 (IFFLLSASIIPNGFNGMSIVF) form a helical membrane-spanning segment. At 42–142 (LAGTPEHRCL…DLVCKDDWKA (101 aa)) the chain is on the extracellular side. Residues N57, N64, and N91 are each glycosylated (N-linked (GlcNAc...) asparagine). Residues 143 to 163 (PLTTSLFFVGVLMGSFISGQL) traverse the membrane as a helical segment. Topologically, residues 164 to 172 (SDRFGRKNV) are cytoplasmic. A helical membrane pass occupies residues 173-193 (LFLTMGMQTGFSFLQVFSVNF). Residues 194-197 (EMFT) lie on the Extracellular side of the membrane. A helical membrane pass occupies residues 198-218 (VLFVLVGMGQISNYVAAFVLG). 218-225 (GTEILSKS) serves as a coordination point for ATP. At 219-232 (TEILSKSIRIIFAT) the chain is on the cytoplasmic side. The chain crosses the membrane as a helical span at residues 233 to 253 (LGVCIFYAFGFMVLPLFAYFI). The Extracellular portion of the chain corresponds to 254–257 (RDWR). The chain crosses the membrane as a helical span at residues 258–278 (MLLLALTVPGVLCGALWWFIP). The Cytoplasmic portion of the chain corresponds to 279 to 341 (ESPRWLISQG…YDLIRTRNIR (63 aa)). Residues 342-362 (VITIMSIILWLTISVGYFGLS) traverse the membrane as a helical segment. At 363–373 (LDTPNLHGDIY) the chain is on the extracellular side. Residues 374 to 394 (VNCFLLAAVEVPAYVLAWLLL) traverse the membrane as a helical segment. Residues 395 to 406 (QYLPRRYSISAA) lie on the Cytoplasmic side of the membrane. Residues 407–427 (LFLGGSVLLFMQLVPSELFYL) traverse the membrane as a helical segment. Residues 428 to 430 (STA) lie on the Extracellular side of the membrane. The helical transmembrane segment at 431-451 (LVMVGKFGITSAYSMVYVYTA) threads the bilayer. At 452 to 462 (ELYPTVVRNMG) the chain is on the cytoplasmic side. A helical transmembrane segment spans residues 463-483 (VGVSSTASRLGSILSPYFVYL). At 484–488 (GAYDR) the chain is on the extracellular side. At Y486 the chain carries Phosphotyrosine. Residues 489–509 (FLPYILMGSLTILTAILTLFF) form a helical membrane-spanning segment. Topologically, residues 510 to 557 (PESFGVPLPDTIDQMLRVKGIKQWQIQSQTRMQKDGEESPTVLKSTAF) are cytoplasmic. Residue S548 is modified to Phosphoserine. At T550 the chain carries Phosphothreonine.

This sequence belongs to the major facilitator (TC 2.A.1) superfamily. Organic cation transporter (TC 2.A.1.19) family. In terms of assembly, interacts with PDZK1. In terms of tissue distribution, widely expressed. Expressed in kidney, liver and testis. Expressed at the brush border of the small, large intestine and colon (at protein level).

It is found in the apical cell membrane. The protein resides in the basal cell membrane. It localises to the cell membrane. The enzyme catalyses (R)-carnitine(out) + Na(+)(out) = (R)-carnitine(in) + Na(+)(in). The catalysed reaction is glycine betaine(out) + Na(+)(out) = glycine betaine(in) + Na(+)(in). It catalyses the reaction glycine betaine(out) + (R)-carnitine(in) = glycine betaine(in) + (R)-carnitine(out). It carries out the reaction O-butanoyl-(R)-carnitine(out) + Na(+)(out) = O-butanoyl-(R)-carnitine(in) + Na(+)(in). The enzyme catalyses O-acetyl-(R)-carnitine(out) + Na(+)(out) = O-acetyl-(R)-carnitine(in) + Na(+)(in). The catalysed reaction is O-propanoyl-(R)-carnitine(out) + Na(+)(out) = O-propanoyl-(R)-carnitine(in) + Na(+)(in). It catalyses the reaction (S)-carnitine(out) + Na(+)(out) = (S)-carnitine(in) + Na(+)(in). It carries out the reaction an O-acyl-(R)-carnitine(out) + Na(+)(out) = an O-acyl-(R)-carnitine(in) + Na(+)(in). The enzyme catalyses L-glutamyl-L-arginyl-glycyl-L-methionyl-L-threonine(out) + Na(+)(out) = L-glutamyl-L-arginyl-glycyl-L-methionyl-L-threonine(in) + Na(+)(in). The catalysed reaction is N,N-dimethylglycine(out) + Na(+)(out) = N,N-dimethylglycine(in) + Na(+)(in). Inhibited by emetine, quinidine and verapamil. The IC(50) of emetine is 4.2 uM. Not inhibited by valproic acid. Transport of (R)-carnitine is stimulated by cholesterol in the plasma membrane. Its function is as follows. Sodium-ion dependent, high affinity carnitine transporter. Involved in the active cellular uptake of carnitine. Transports one sodium ion with one molecule of carnitine. Also transports organic cations such as tetraethylammonium (TEA) without the involvement of sodium. Also relative uptake activity ratio of carnitine to TEA is 11.3. May also contribute to regulate the transport of organic compounds in testis across the blood-testis-barrier. This is Organic cation/carnitine transporter 2 from Mus musculus (Mouse).